A 173-amino-acid chain; its full sequence is NADH-ubiquinone oxidoreductase chain 6 (173 aa).

A run of 5 helical transmembrane segments spans residues 1–21, 27–47, 48–68, 87–107, and 139–159; these read MTYF…AVAS, YGVL…LSLG, VSFI…VVFV, VVIY…VGDF, and WGAG…FVVL.

The protein belongs to the complex I subunit 6 family.

The protein localises to the mitochondrion membrane. It catalyses the reaction a ubiquinone + NADH + 5 H(+)(in) = a ubiquinol + NAD(+) + 4 H(+)(out). In terms of biological role, core subunit of the mitochondrial membrane respiratory chain NADH dehydrogenase (Complex I) that is believed to belong to the minimal assembly required for catalysis. Complex I functions in the transfer of electrons from NADH to the respiratory chain. The immediate electron acceptor for the enzyme is believed to be ubiquinone. The protein is NADH-ubiquinone oxidoreductase chain 6 (MT-ND6) of Struthio camelus (Common ostrich).